The chain runs to 1032 residues: Caspase recruitment domain-containing protein 10 (1032 aa).

Disordered stretches follow at residues 1–23 (MPGR…SEAE), 253–276 (RARG…EPDN), and 481–553 (EFPS…MSDI). Ser18 carries the post-translational modification Phosphoserine. Positions 23–115 (EEDALWERIE…EHFTLLTGQE (93 aa)) constitute a CARD domain. A coiled-coil region spans residues 138–456 (TEVRRLREAR…LEVQLQRAQG (319 aa)). Basic and acidic residues-rich tracts occupy residues 261–276 (AEEK…EPDN) and 504–517 (HNSE…KEIN).

As to quaternary structure, CARD10 and BCL10 bind to each other by CARD-CARD interaction. They both participate in a complex with MALT1, where MALT1 binds to BCL10. Interacts with TMEM43; this interaction is essential for EGFR-mediated NF-kappa-B activation. As to expression, detected in adult heart, kidney and liver; lower levels in intestine, placenta, muscle and lung. Also found in fetal lung, liver and kidney.

The protein resides in the cytoplasm. In terms of biological role, scaffold protein that plays an important role in mediating the activation of NF-kappa-B via BCL10 or EGFR. The protein is Caspase recruitment domain-containing protein 10 (CARD10) of Homo sapiens (Human).